A 123-amino-acid polypeptide reads, in one-letter code: Large ribosomal subunit protein uL14 (123 aa).

Belongs to the universal ribosomal protein uL14 family. In terms of assembly, part of the 50S ribosomal subunit. Forms a cluster with proteins L3 and L19. In the 70S ribosome, L14 and L19 interact and together make contacts with the 16S rRNA in bridges B5 and B8.

Binds to 23S rRNA. Forms part of two intersubunit bridges in the 70S ribosome. This chain is Large ribosomal subunit protein uL14, found in Blochmanniella floridana.